The sequence spans 371 residues: DNA replication and repair protein RecF (371 aa).

30–37 (GENAQGKT) lines the ATP pocket.

Belongs to the RecF family.

Its subcellular location is the cytoplasm. The RecF protein is involved in DNA metabolism; it is required for DNA replication and normal SOS inducibility. RecF binds preferentially to single-stranded, linear DNA. It also seems to bind ATP. The polypeptide is DNA replication and repair protein RecF (Staphylococcus haemolyticus (strain JCSC1435)).